The sequence spans 507 residues: Protein DETOXIFICATION 39 (507 aa).

12 helical membrane passes run 58-78 (VLFR…GMGI), 92-112 (LAAA…MLGM), 141-161 (IVLA…YPIL), 178-198 (IAGL…QKFL), 209-229 (FISA…VYVM), 233-253 (FMGI…SQCF), 287-307 (AVMI…AGLL), 318-338 (SICM…NAAV), 359-379 (WTAT…VIWF), 403-423 (FLAI…VAVG), 433-453 (VNVG…GFTF), and 459-479 (GIWT…LYVT).

It belongs to the multi antimicrobial extrusion (MATE) (TC 2.A.66.1) family.

The protein localises to the membrane. The sequence is that of Protein DETOXIFICATION 39 from Arabidopsis thaliana (Mouse-ear cress).